We begin with the raw amino-acid sequence, 366 residues long: 15-cis-zeta-carotene isomerase, chloroplastic (366 aa).

Residues 1–45 (MASQLRLHLAATPPLLPHRRPHLARPLCPTLNPIRAPLPPLSRVL) constitute a chloroplast transit peptide. 6 helical membrane passes run 94 to 114 (SWAY…VLWI), 136 to 156 (EVVM…MASL), 171 to 191 (VLFA…FINH), 203 to 223 (GITG…FFLY), 260 to 280 (VIWC…AASV), and 338 to 358 (LPYV…PLMQ).

In terms of tissue distribution, expressed in leaves and roots, and at lower levels in embryos and endosperm.

The protein localises to the plastid. The protein resides in the chloroplast membrane. It carries out the reaction 9,9',15-tri-cis-zeta-carotene = 9,9'-di-cis-zeta-carotene. Isomerase involved in the biosynthesis of carotenoids. Catalyzes the cis- to trans-conversion of the 15-cis-bond in 9,15,9'-tri-cis-zeta-carotene. The sequence is that of 15-cis-zeta-carotene isomerase, chloroplastic from Zea mays (Maize).